The following is a 160-amino-acid chain: Ribosomal RNA large subunit methyltransferase H (160 aa).

Residues leucine 76, glycine 108, and 127–132 (LGKMTW) each bind S-adenosyl-L-methionine.

The protein belongs to the RNA methyltransferase RlmH family. As to quaternary structure, homodimer.

The protein localises to the cytoplasm. The catalysed reaction is pseudouridine(1915) in 23S rRNA + S-adenosyl-L-methionine = N(3)-methylpseudouridine(1915) in 23S rRNA + S-adenosyl-L-homocysteine + H(+). Functionally, specifically methylates the pseudouridine at position 1915 (m3Psi1915) in 23S rRNA. This chain is Ribosomal RNA large subunit methyltransferase H, found in Sinorhizobium fredii (strain NBRC 101917 / NGR234).